Here is a 1806-residue protein sequence, read N- to C-terminus: Focadhesin (1806 aa).

Positions 733-760 (ARPIPKQPEVEDEVKQNEEENEEEEDIS) are disordered.

The protein localises to the cell junction. It localises to the focal adhesion. Its subcellular location is the cytoplasm. It is found in the cytosol. Functionally, required for the maintenance of SKIC2 and SKIC3 proteostatic levels in the liver. May be involved in the regulation of RNA degradation by the exosome complex. This is Focadhesin (focad) from Danio rerio (Zebrafish).